Consider the following 389-residue polypeptide: Alanine racemase (389 aa).

K46 (proton acceptor; specific for D-alanine) is an active-site residue. Residue K46 is modified to N6-(pyridoxal phosphate)lysine. Position 144 (R144) interacts with substrate. Y275 functions as the Proton acceptor; specific for L-alanine in the catalytic mechanism. Position 323 (M323) interacts with substrate.

This sequence belongs to the alanine racemase family. Pyridoxal 5'-phosphate serves as cofactor.

The enzyme catalyses L-alanine = D-alanine. It functions in the pathway amino-acid biosynthesis; D-alanine biosynthesis; D-alanine from L-alanine: step 1/1. In terms of biological role, catalyzes the interconversion of L-alanine and D-alanine. May also act on other amino acids. The polypeptide is Alanine racemase (alr) (Mycolicibacterium smegmatis (strain ATCC 700084 / mc(2)155) (Mycobacterium smegmatis)).